Reading from the N-terminus, the 137-residue chain is MFVPKKSKYRKVFKGRIKGNTKGGSTLSFGDYGLKTIEAGRVQSKHIETVRRVISRTLKRSGKIWIRIFPDTPISKKPTDVRMGKGKGSVEFWVFKAKPGRVLFEISSDVPMHLAKLALEKAMAKLPVKCKFISNYS.

The protein belongs to the universal ribosomal protein uL16 family. Part of the 50S ribosomal subunit.

Functionally, binds 23S rRNA and is also seen to make contacts with the A and possibly P site tRNAs. The sequence is that of Large ribosomal subunit protein uL16 from Wolbachia sp. subsp. Brugia malayi (strain TRS).